A 170-amino-acid polypeptide reads, in one-letter code: Ureidoglycolate lyase (170 aa).

This sequence belongs to the ureidoglycolate lyase family. Homodimer. It depends on Ni(2+) as a cofactor.

The catalysed reaction is (S)-ureidoglycolate = urea + glyoxylate. It participates in nitrogen metabolism; (S)-allantoin degradation. Its function is as follows. Catalyzes the catabolism of the allantoin degradation intermediate (S)-ureidoglycolate, generating urea and glyoxylate. Involved in the utilization of allantoin as nitrogen source. This chain is Ureidoglycolate lyase, found in Burkholderia mallei (strain NCTC 10247).